A 58-amino-acid chain; its full sequence is UPF0391 membrane protein Sfri_4000 (58 aa).

The next 2 helical transmembrane spans lie at 6–26 and 27–47; these read LMFLVIAVIAGLFGFTGIAGA and AAGIAKIIFFIFIVLLVISLV.

This sequence belongs to the UPF0391 family.

It localises to the cell membrane. This Shewanella frigidimarina (strain NCIMB 400) protein is UPF0391 membrane protein Sfri_4000.